Reading from the N-terminus, the 748-residue chain is Catalase-peroxidase (748 aa).

Residues Trp-92–Tyr-238 constitute a cross-link (tryptophyl-tyrosyl-methioninium (Trp-Tyr) (with M-264)). Catalysis depends on His-93, which acts as the Proton acceptor. A cross-link (tryptophyl-tyrosyl-methioninium (Tyr-Met) (with W-92)) is located at residues Tyr-238 to Met-264. His-279 is a binding site for heme b.

Belongs to the peroxidase family. Peroxidase/catalase subfamily. Homodimer or homotetramer. The cofactor is heme b. In terms of processing, formation of the three residue Trp-Tyr-Met cross-link is important for the catalase, but not the peroxidase activity of the enzyme.

It catalyses the reaction H2O2 + AH2 = A + 2 H2O. The catalysed reaction is 2 H2O2 = O2 + 2 H2O. In terms of biological role, bifunctional enzyme with both catalase and broad-spectrum peroxidase activity. In Xanthomonas axonopodis pv. citri (strain 306), this protein is Catalase-peroxidase.